The chain runs to 161 residues: MPSFDTVLETDMVKVKNAVENTSKEIGTRFDFKGTAASIELKDKDITLVGDSDFQIDQINDVLRNKLTKAGVDIRFLDVGKIEKIGGDKVKQVTKVRDGIETEQAKKIQQLIKGSKMKVQAAIQEGKVRVTGAKRDDLQAAMALIRADMKDLPLSFDNFRD.

The protein belongs to the YajQ family.

Functionally, nucleotide-binding protein. The chain is Nucleotide-binding protein Bpro_1596 from Polaromonas sp. (strain JS666 / ATCC BAA-500).